The primary structure comprises 61 residues: UPF0434 protein PSEEN1604 (61 aa).

It belongs to the UPF0434 family.

This is UPF0434 protein PSEEN1604 from Pseudomonas entomophila (strain L48).